A 29-amino-acid polypeptide reads, in one-letter code: Brevinin-2Ed (29 aa).

The cysteines at positions 23 and 29 are disulfide-linked.

This sequence belongs to the frog skin active peptide (FSAP) family. Brevinin subfamily. Expressed by the skin glands.

The protein resides in the secreted. Shows antibacterial activity against representative Gram-negative and Gram-positive bacterial species, and hemolytic activity. The protein is Brevinin-2Ed of Pelophylax lessonae (Pool frog).